Reading from the N-terminus, the 165-residue chain is Thiol peroxidase (165 aa).

Residues 18–165 (PQVGDVVTDF…PNYDAALAVL (148 aa)) enclose the Thioredoxin domain. Cys60 functions as the Cysteine sulfenic acid (-SOH) intermediate in the catalytic mechanism. A disulfide bridge links Cys60 with Cys94.

This sequence belongs to the peroxiredoxin family. Tpx subfamily. Homodimer.

The catalysed reaction is a hydroperoxide + [thioredoxin]-dithiol = an alcohol + [thioredoxin]-disulfide + H2O. Its function is as follows. Thiol-specific peroxidase that catalyzes the reduction of hydrogen peroxide and organic hydroperoxides to water and alcohols, respectively. Plays a role in cell protection against oxidative stress by detoxifying peroxides. The polypeptide is Thiol peroxidase (Pasteurella multocida (strain Pm70)).